The primary structure comprises 458 residues: Argininosuccinate lyase (458 aa).

The protein belongs to the lyase 1 family. Argininosuccinate lyase subfamily.

The protein resides in the cytoplasm. It carries out the reaction 2-(N(omega)-L-arginino)succinate = fumarate + L-arginine. It functions in the pathway amino-acid biosynthesis; L-arginine biosynthesis; L-arginine from L-ornithine and carbamoyl phosphate: step 3/3. The protein is Argininosuccinate lyase of Hydrogenobaculum sp. (strain Y04AAS1).